A 327-amino-acid chain; its full sequence is tRNA uridine(34) hydroxylase (327 aa).

Positions Ser-123 to Ser-217 constitute a Rhodanese domain. Cys-177 acts as the Cysteine persulfide intermediate in catalysis.

Belongs to the TrhO family.

It carries out the reaction uridine(34) in tRNA + AH2 + O2 = 5-hydroxyuridine(34) in tRNA + A + H2O. Its function is as follows. Catalyzes oxygen-dependent 5-hydroxyuridine (ho5U) modification at position 34 in tRNAs. The sequence is that of tRNA uridine(34) hydroxylase from Shewanella pealeana (strain ATCC 700345 / ANG-SQ1).